A 282-amino-acid polypeptide reads, in one-letter code: UDP-3-O-acyl-N-acetylglucosamine deacetylase (282 aa).

Zn(2+)-binding residues include His74, His226, and Asp230. His253 acts as the Proton donor in catalysis.

The protein belongs to the LpxC family. The cofactor is Zn(2+).

The enzyme catalyses a UDP-3-O-[(3R)-3-hydroxyacyl]-N-acetyl-alpha-D-glucosamine + H2O = a UDP-3-O-[(3R)-3-hydroxyacyl]-alpha-D-glucosamine + acetate. The protein operates within glycolipid biosynthesis; lipid IV(A) biosynthesis; lipid IV(A) from (3R)-3-hydroxytetradecanoyl-[acyl-carrier-protein] and UDP-N-acetyl-alpha-D-glucosamine: step 2/6. In terms of biological role, catalyzes the hydrolysis of UDP-3-O-myristoyl-N-acetylglucosamine to form UDP-3-O-myristoylglucosamine and acetate, the committed step in lipid A biosynthesis. In Aquifex aeolicus (strain VF5), this protein is UDP-3-O-acyl-N-acetylglucosamine deacetylase.